Here is a 140-residue protein sequence, read N- to C-terminus: Nucleoside diphosphate kinase (140 aa).

ATP is bound by residues Lys-11, Phe-59, Arg-87, Thr-93, Arg-104, and Asn-114. His-117 functions as the Pros-phosphohistidine intermediate in the catalytic mechanism.

This sequence belongs to the NDK family. As to quaternary structure, homotetramer. Requires Mg(2+) as cofactor.

Its subcellular location is the cytoplasm. The enzyme catalyses a 2'-deoxyribonucleoside 5'-diphosphate + ATP = a 2'-deoxyribonucleoside 5'-triphosphate + ADP. It carries out the reaction a ribonucleoside 5'-diphosphate + ATP = a ribonucleoside 5'-triphosphate + ADP. Functionally, major role in the synthesis of nucleoside triphosphates other than ATP. The ATP gamma phosphate is transferred to the NDP beta phosphate via a ping-pong mechanism, using a phosphorylated active-site intermediate. The protein is Nucleoside diphosphate kinase of Brucella melitensis biotype 1 (strain ATCC 23456 / CCUG 17765 / NCTC 10094 / 16M).